The following is a 362-amino-acid chain: Probable dual-specificity RNA methyltransferase RlmN (362 aa).

The Proton acceptor role is filled by glutamate 105. The Radical SAM core domain occupies 111–344; the sequence is HNYGNSVCVT…VTIRREQGHD (234 aa). Cysteine 118 and cysteine 349 are oxidised to a cystine. [4Fe-4S] cluster-binding residues include cysteine 125, cysteine 129, and cysteine 132. S-adenosyl-L-methionine is bound by residues 175-176, serine 207, 230-232, and asparagine 306; these read GE and SLH. Catalysis depends on cysteine 349, which acts as the S-methylcysteine intermediate.

The protein belongs to the radical SAM superfamily. RlmN family. [4Fe-4S] cluster is required as a cofactor.

The protein localises to the cytoplasm. The enzyme catalyses adenosine(2503) in 23S rRNA + 2 reduced [2Fe-2S]-[ferredoxin] + 2 S-adenosyl-L-methionine = 2-methyladenosine(2503) in 23S rRNA + 5'-deoxyadenosine + L-methionine + 2 oxidized [2Fe-2S]-[ferredoxin] + S-adenosyl-L-homocysteine. It carries out the reaction adenosine(37) in tRNA + 2 reduced [2Fe-2S]-[ferredoxin] + 2 S-adenosyl-L-methionine = 2-methyladenosine(37) in tRNA + 5'-deoxyadenosine + L-methionine + 2 oxidized [2Fe-2S]-[ferredoxin] + S-adenosyl-L-homocysteine. Functionally, specifically methylates position 2 of adenine 2503 in 23S rRNA and position 2 of adenine 37 in tRNAs. In Halalkalibacterium halodurans (strain ATCC BAA-125 / DSM 18197 / FERM 7344 / JCM 9153 / C-125) (Bacillus halodurans), this protein is Probable dual-specificity RNA methyltransferase RlmN.